Here is a 147-residue protein sequence, read N- to C-terminus: Ribonuclease 4 (147 aa).

The N-terminal stretch at 1–28 (MDIQRTQSLLLLLLLTLLGLGLVQPSYG) is a signal peptide. Glutamine 29 is subject to Pyrrolidone carboxylic acid. Arginine 35, histidine 40, lysine 68, asparagine 71, and threonine 72 together coordinate dUMP. The active-site Proton acceptor is histidine 40. Intrachain disulfides connect cysteine 53-cysteine 109, cysteine 67-cysteine 120, cysteine 85-cysteine 135, and cysteine 92-cysteine 99. Catalysis depends on histidine 144, which acts as the Proton donor. Phenylalanine 145 contacts dUMP.

Belongs to the pancreatic ribonuclease family.

It is found in the secreted. Cleaves preferentially after uridine bases. Has antimicrobial activity against uropathogenic E.coli (UPEC). Probably contributes to urinary tract sterility. The polypeptide is Ribonuclease 4 (Rnase4) (Rattus norvegicus (Rat)).